Reading from the N-terminus, the 219-residue chain is tRNA (guanine-N(7)-)-methyltransferase (219 aa).

Residues Asp47, Glu72, Asn99, and Asp125 each coordinate S-adenosyl-L-methionine. Asp125 is a catalytic residue. 2 residues coordinate substrate: Lys129 and Asp161.

It belongs to the class I-like SAM-binding methyltransferase superfamily. TrmB family.

The catalysed reaction is guanosine(46) in tRNA + S-adenosyl-L-methionine = N(7)-methylguanosine(46) in tRNA + S-adenosyl-L-homocysteine. It participates in tRNA modification; N(7)-methylguanine-tRNA biosynthesis. In terms of biological role, catalyzes the formation of N(7)-methylguanine at position 46 (m7G46) in tRNA. The chain is tRNA (guanine-N(7)-)-methyltransferase from Nostoc sp. (strain PCC 7120 / SAG 25.82 / UTEX 2576).